The chain runs to 64 residues: Large ribosomal subunit protein bL35 (64 aa).

It belongs to the bacterial ribosomal protein bL35 family.

In Shewanella baltica (strain OS223), this protein is Large ribosomal subunit protein bL35.